Consider the following 743-residue polypeptide: Phenylalanine ammonia-lyase 1 (743 aa).

Y120 serves as the catalytic Proton donor/acceptor. A cross-link (5-imidazolinone (Ala-Gly)) is located at residues 224–226; sequence ASG. 2,3-didehydroalanine (Ser) is present on S225. (E)-cinnamate contacts are provided by N287, Q377, R383, N413, K484, E512, and N515.

The protein belongs to the PAL/histidase family. Homotetramer. In terms of processing, contains an active site 4-methylidene-imidazol-5-one (MIO), which is formed autocatalytically by cyclization and dehydration of residues Ala-Ser-Gly.

The protein localises to the cytoplasm. The catalysed reaction is L-phenylalanine = (E)-cinnamate + NH4(+). It participates in phenylpropanoid metabolism; trans-cinnamate biosynthesis; trans-cinnamate from L-phenylalanine: step 1/1. Functionally, catalyzes the non-oxidative deamination of L-phenylalanine to form trans-cinnamic acid and a free ammonium ion. Facilitates the commitment step in phenylpropanoid pathways that produce secondary metabolites such as lignins, coumarins and flavonoids. This is Phenylalanine ammonia-lyase 1 from Pleurotus ostreatus (Oyster mushroom).